The sequence spans 380 residues: Alanine racemase (380 aa).

The active-site Proton acceptor; specific for D-alanine is lysine 39. Residue lysine 39 is modified to N6-(pyridoxal phosphate)lysine. Position 137 (arginine 137) interacts with substrate. Tyrosine 263 serves as the catalytic Proton acceptor; specific for L-alanine. Methionine 310 contributes to the substrate binding site.

It belongs to the alanine racemase family. It depends on pyridoxal 5'-phosphate as a cofactor.

The catalysed reaction is L-alanine = D-alanine. Its pathway is amino-acid biosynthesis; D-alanine biosynthesis; D-alanine from L-alanine: step 1/1. Functionally, catalyzes the interconversion of L-alanine and D-alanine. May also act on other amino acids. This chain is Alanine racemase (alr), found in Macrococcus caseolyticus (strain JCSC5402) (Macrococcoides caseolyticum).